The following is a 138-amino-acid chain: Large ribosomal subunit protein uL16 (138 aa).

The span at 1–13 (MLQPSRRKYRKEQ) shows a compositional bias: basic residues. The segment at 1–22 (MLQPSRRKYRKEQKGRNTGLAT) is disordered.

Belongs to the universal ribosomal protein uL16 family. Part of the 50S ribosomal subunit.

Its function is as follows. Binds 23S rRNA and is also seen to make contacts with the A and possibly P site tRNAs. In Bordetella petrii (strain ATCC BAA-461 / DSM 12804 / CCUG 43448), this protein is Large ribosomal subunit protein uL16.